The following is a 100-amino-acid chain: Small ribosomal subunit protein uS14 (100 aa).

The protein belongs to the universal ribosomal protein uS14 family. Part of the 30S ribosomal subunit. Contacts proteins S3 and S10.

Binds 16S rRNA, required for the assembly of 30S particles and may also be responsible for determining the conformation of the 16S rRNA at the A site. In Prochlorococcus marinus (strain MIT 9301), this protein is Small ribosomal subunit protein uS14.